The following is a 190-amino-acid chain: Nuclear transcription factor Y subunit A-7 (190 aa).

Residues 1 to 33 form a disordered region; that stretch reads MTSSIHELSDNIGSHEKQEQRDSHFQPPIPSAR. A compositionally biased stretch (basic and acidic residues) spans 7-24; that stretch reads ELSDNIGSHEKQEQRDSH. Positions 103–126 match the Subunit association domain (SAD) motif; sequence FVNAKQYHGILRRRQSRARLESQN. Positions 133–158 form a DNA-binding region, NFYA/HAP2-type; sequence KPYLHESRHLHAIRRPRGCGGRFLNA. The interval 147-190 is disordered; it reads RPRGCGGRFLNAKKEDEHHEDSSHEEKSNLSAGKSAMAASSGTS. Over residues 158-174 the composition is skewed to basic and acidic residues; the sequence is AKKEDEHHEDSSHEEKS. The span at 177–190 shows a compositional bias: low complexity; sequence SAGKSAMAASSGTS.

This sequence belongs to the NFYA/HAP2 subunit family. As to quaternary structure, heterotrimeric transcription factor composed of three components, NF-YA, NF-YB and NF-YC. NF-YB and NF-YC must interact and dimerize for NF-YA association and DNA binding.

Its subcellular location is the nucleus. In terms of biological role, stimulates the transcription of various genes by recognizing and binding to a CCAAT motif in promoters. The chain is Nuclear transcription factor Y subunit A-7 (NFYA7) from Arabidopsis thaliana (Mouse-ear cress).